Consider the following 179-residue polypeptide: Pectinesterase inhibitor 5 (179 aa).

Residues 1 to 25 (MATMLINHMLFLTSLLIVVFPVANA) form the signal peptide. 2 disulfide bridges follow: C35–C44 and C101–C141.

Belongs to the PMEI family. Expressed in seeds, buds, and mature flowers.

It localises to the secreted. The protein resides in the extracellular space. The protein localises to the apoplast. Pectin methylesterase (PME) inhibitor that targets PME from seeds and modulates PME activity and pectin methylesterification during seed germination. The protein is Pectinesterase inhibitor 5 of Arabidopsis thaliana (Mouse-ear cress).